Reading from the N-terminus, the 441-residue chain is Ribosomal protein uS12 methylthiotransferase RimO (441 aa).

An MTTase N-terminal domain is found at proline 7–proline 117. Cysteine 16, cysteine 52, cysteine 81, cysteine 148, cysteine 152, and cysteine 155 together coordinate [4Fe-4S] cluster. The Radical SAM core domain maps to leucine 134–arginine 371. The region spanning lysine 374 to glycine 440 is the TRAM domain.

Belongs to the methylthiotransferase family. RimO subfamily. Requires [4Fe-4S] cluster as cofactor.

It is found in the cytoplasm. It catalyses the reaction L-aspartate(89)-[ribosomal protein uS12]-hydrogen + (sulfur carrier)-SH + AH2 + 2 S-adenosyl-L-methionine = 3-methylsulfanyl-L-aspartate(89)-[ribosomal protein uS12]-hydrogen + (sulfur carrier)-H + 5'-deoxyadenosine + L-methionine + A + S-adenosyl-L-homocysteine + 2 H(+). Its function is as follows. Catalyzes the methylthiolation of an aspartic acid residue of ribosomal protein uS12. The sequence is that of Ribosomal protein uS12 methylthiotransferase RimO from Bradyrhizobium sp. (strain BTAi1 / ATCC BAA-1182).